We begin with the raw amino-acid sequence, 271 residues long: MRNKLQQAKRIVIKVGTSSLIYPNGNINLKAIDQLAFTLSDLSNQGKEIILVSSGAIGVGLNKLNLSVRPTTIPEQQAVAAVGQAELMNIYNQRFSTYSQQMAQVLLTRDVIEYPESRNNVTNTFEQLLKMNIIPIVNENDTVAIEELDHLTKFGDNDQLSAIVCQIVQADLLVMLSDIDGFFSDNPTVNKEATLFSEINEINEDLFQLAGGKGSRFGTGGMSSKLKAAERVLANQQAMILANGKQPKIIFEILEGKDIGTLFIKGGHESD.

Lysine 14 contacts ATP. Substrate contacts are provided by serine 54, aspartate 141, and asparagine 157. ATP-binding positions include 177–178 and 219–225; these read SD and TGGMSSK.

The protein belongs to the glutamate 5-kinase family.

Its subcellular location is the cytoplasm. It carries out the reaction L-glutamate + ATP = L-glutamyl 5-phosphate + ADP. Its pathway is amino-acid biosynthesis; L-proline biosynthesis; L-glutamate 5-semialdehyde from L-glutamate: step 1/2. Functionally, catalyzes the transfer of a phosphate group to glutamate to form L-glutamate 5-phosphate. This chain is Glutamate 5-kinase, found in Enterococcus faecalis (strain ATCC 700802 / V583).